The chain runs to 720 residues: Neurochondrin (720 aa).

It belongs to the neurochondrin family.

Its subcellular location is the cytoplasm. The protein localises to the cytosol. It localises to the cell projection. The protein resides in the dendrite. It is found in the postsynapse. In terms of biological role, probably involved in signal transduction, in the nervous system. Required for the spatial learning process. May also be involved in neurite outgrowth. This is Neurochondrin (ncdn) from Xenopus laevis (African clawed frog).